Consider the following 299-residue polypeptide: Taste receptor type 2 member 45 (299 aa).

Residue M1 is a topological domain, extracellular. The helical transmembrane segment at 2 to 22 (ITFLPIIFSILVVVTFVIGNF) threads the bilayer. The Cytoplasmic segment spans residues 23–55 (ANGFIALVNSTEWVKRQKISFADQIVTALAVSR). A helical membrane pass occupies residues 56–76 (VGLLWVLLLNWYSTVLNPAFC). Over 77–98 (SVELRTTAYNIWAVTGHFSNWP) the chain is Extracellular. A helical transmembrane segment spans residues 99-119 (ATSLSIFYLLKIANFSNLIFL). The Cytoplasmic portion of the chain corresponds to 120 to 126 (RLKRRVK). A helical membrane pass occupies residues 127–147 (SVILVVLLGPLLFLACHLFVV). The Extracellular segment spans residues 148–178 (NMNQIVWTKEYEGNMTWKIKLRRAMYLSDTT). N161 is a glycosylation site (N-linked (GlcNAc...) asparagine). A helical transmembrane segment spans residues 179 to 199 (VTMLANLVPFTVTLISFLLLV). Topologically, residues 200–229 (CSLCKHLKKMQLHGKGSQDPSTKVHIKVLQ) are cytoplasmic. The chain crosses the membrane as a helical span at residues 230-250 (TVISFFLLRAIYFVSVIISVW). The Extracellular portion of the chain corresponds to 251–259 (SFKNLENKP). The chain crosses the membrane as a helical span at residues 260-280 (VFMFCQAIGFSCSSAHPFILI). Topologically, residues 281–299 (WGNKKLKQTYLSVLWQMRY) are cytoplasmic.

The protein belongs to the G-protein coupled receptor T2R family. In terms of tissue distribution, expressed in subsets of taste receptor cells of the tongue and exclusively in gustducin-positive cells.

The protein localises to the membrane. Functionally, receptor that may play a role in the perception of bitterness and is gustducin-linked. May play a role in sensing the chemical composition of the gastrointestinal content. The activity of this receptor may stimulate alpha gustducin, mediate PLC-beta-2 activation and lead to the gating of TRPM5. The polypeptide is Taste receptor type 2 member 45 (TAS2R45) (Homo sapiens (Human)).